Consider the following 465-residue polypeptide: Ribulose bisphosphate carboxylase large chain (465 aa).

An N6,N6,N6-trimethyllysine modification is found at K4. 2 residues coordinate substrate: N113 and T163. Catalysis depends on K165, which acts as the Proton acceptor. K167 serves as a coordination point for substrate. Mg(2+) contacts are provided by K191, D193, and E194. Position 191 is an N6-carboxylysine (K191). Residue H284 is the Proton acceptor of the active site. Substrate-binding residues include R285, H317, and S369.

Belongs to the RuBisCO large chain family. Type I subfamily. In terms of assembly, heterohexadecamer of 8 large chains and 8 small chains; disulfide-linked. The disulfide link is formed within the large subunit homodimers. It depends on Mg(2+) as a cofactor. The disulfide bond which can form in the large chain dimeric partners within the hexadecamer appears to be associated with oxidative stress and protein turnover.

The protein resides in the plastid. The protein localises to the chloroplast. The enzyme catalyses 2 (2R)-3-phosphoglycerate + 2 H(+) = D-ribulose 1,5-bisphosphate + CO2 + H2O. It carries out the reaction D-ribulose 1,5-bisphosphate + O2 = 2-phosphoglycolate + (2R)-3-phosphoglycerate + 2 H(+). Functionally, ruBisCO catalyzes two reactions: the carboxylation of D-ribulose 1,5-bisphosphate, the primary event in carbon dioxide fixation, as well as the oxidative fragmentation of the pentose substrate in the photorespiration process. Both reactions occur simultaneously and in competition at the same active site. The sequence is that of Ribulose bisphosphate carboxylase large chain from Platytheca verticillata.